We begin with the raw amino-acid sequence, 177 residues long: CCHC-type zinc finger nucleic acid binding protein (177 aa).

S2 is modified (N-acetylserine). A CCHC-type 1 zinc finger spans residues 4–21; the sequence is NECFKCGRSGHWARECPT. K8 is subject to N6-acetyllysine. Omega-N-methylarginine; by PRMT1 occurs at positions 25 and 27. Residues 25–38 form an RNA-binding Arg/Gly-rich region (RGG-box) region; that stretch reads RGRGMRSRGRGGFT. Omega-N-methylarginine is present on residues R32 and R34. A Phosphoserine modification is found at S49. 6 consecutive CCHC-type zinc fingers follow at residues 52–69, 72–89, 96–113, 117–134, 135–152, and 156–173; these read DICY…DCDL, DACY…DCKE, QCCY…DCDH, QKCY…DCTK, VKCY…NCSK, and VNCY…ECTI. Omega-N-methylarginine occurs at positions 73, 79, and 80.

Associates with the 40S ribosomal subunit, the 80S ribosome and with polysomes. Post-translationally, arginine methylation by PRMT1 in the Arg/Gly-rich region impedes RNA binding. Expressed in the liver, kidney, spleen, testis, lung, muscle and adrenal glands.

The protein resides in the nucleus. It is found in the cytoplasm. Its subcellular location is the endoplasmic reticulum. Functionally, single-stranded DNA-binding protein that preferentially binds to the sterol regulatory element (SRE) sequence 5'-GTGCGGTG-3', and thereby mediates transcriptional repression. Has a role as transactivator of the Myc promoter. Binds single-stranded RNA in a sequence-specific manner. Binds G-rich elements in target mRNA coding sequences. Prevents G-quadruplex structure formation in vitro, suggesting a role in supporting translation by resolving stable structures on mRNAs. Its function is as follows. Binds to RNA. This chain is CCHC-type zinc finger nucleic acid binding protein, found in Homo sapiens (Human).